Consider the following 257-residue polypeptide: Pyridoxine 5'-phosphate synthase (257 aa).

3-amino-2-oxopropyl phosphate is bound at residue Asn-6. 1-deoxy-D-xylulose 5-phosphate is bound at residue 8 to 9 (DH). 3-amino-2-oxopropyl phosphate is bound at residue Arg-17. His-41 (proton acceptor) is an active-site residue. Positions 43 and 48 each coordinate 1-deoxy-D-xylulose 5-phosphate. Glu-68 serves as the catalytic Proton acceptor. Thr-98 serves as a coordination point for 1-deoxy-D-xylulose 5-phosphate. The Proton donor role is filled by His-210. 3-amino-2-oxopropyl phosphate is bound by residues Gly-211 and 232-233 (GQ).

Belongs to the PNP synthase family. Homooctamer; tetramer of dimers.

It is found in the cytoplasm. The catalysed reaction is 3-amino-2-oxopropyl phosphate + 1-deoxy-D-xylulose 5-phosphate = pyridoxine 5'-phosphate + phosphate + 2 H2O + H(+). It participates in cofactor biosynthesis; pyridoxine 5'-phosphate biosynthesis; pyridoxine 5'-phosphate from D-erythrose 4-phosphate: step 5/5. Its function is as follows. Catalyzes the complicated ring closure reaction between the two acyclic compounds 1-deoxy-D-xylulose-5-phosphate (DXP) and 3-amino-2-oxopropyl phosphate (1-amino-acetone-3-phosphate or AAP) to form pyridoxine 5'-phosphate (PNP) and inorganic phosphate. The sequence is that of Pyridoxine 5'-phosphate synthase from Campylobacter jejuni subsp. jejuni serotype O:6 (strain 81116 / NCTC 11828).